Reading from the N-terminus, the 169-residue chain is Succinate dehydrogenase cytochrome b560 subunit, mitochondrial (169 aa).

The N-terminal 29 residues, 1 to 29, are a transit peptide targeting the mitochondrion; it reads MAALLLRHVGRHCLRAHLSPQLCIRNAVP. Over 30 to 62 the chain is Mitochondrial matrix; that stretch reads LGTTAKEEMERFWSKNTTLNRPLSPHISIYGWS. A helical membrane pass occupies residues 63-92; it reads LPMAMSICHRGTGIALSAGVSLFGLSALLV. Over 93–112 the chain is Mitochondrial intermembrane; it reads PGSFESHLEFVKSLCLGPAL. A helical transmembrane segment spans residues 113 to 137; it reads IHTAKFALVFPLMYHTWNGIRHLMW. A heme b-binding site is contributed by H127. Residues 138–144 lie on the Mitochondrial matrix side of the membrane; it reads DLGKGLT. The chain crosses the membrane as a helical span at residues 145–166; it reads ISQLHQSGVAVLVLTVLSSVGL. Residues 167 to 169 are Mitochondrial intermembrane-facing; it reads AAM.

This sequence belongs to the cytochrome b560 family. Component of complex II composed of four subunits: the flavoprotein (FP) SDHA, iron-sulfur protein (IP) SDHB, and a cytochrome b560 composed of SDHC and SDHD. Requires heme b as cofactor. In terms of processing, the N-terminus is blocked.

It localises to the mitochondrion inner membrane. Its pathway is carbohydrate metabolism; tricarboxylic acid cycle. In terms of biological role, membrane-anchoring subunit of succinate dehydrogenase (SDH) that is involved in complex II of the mitochondrial electron transport chain and is responsible for transferring electrons from succinate to ubiquinone (coenzyme Q). SDH also oxidizes malate to the non-canonical enol form of oxaloacetate, enol-oxaloacetate. Enol-oxaloacetate, which is a potent inhibitor of the succinate dehydrogenase activity, is further isomerized into keto-oxaloacetate. This chain is Succinate dehydrogenase cytochrome b560 subunit, mitochondrial (SDHC), found in Bos taurus (Bovine).